The chain runs to 143 residues: Large-conductance mechanosensitive channel (143 aa).

Transmembrane regions (helical) follow at residues 21-41 (VGVI…ADII), 44-64 (VVGL…LGTV), and 86-106 (GNFI…FMMV).

The protein belongs to the MscL family. In terms of assembly, homopentamer.

It is found in the cell inner membrane. Channel that opens in response to stretch forces in the membrane lipid bilayer. May participate in the regulation of osmotic pressure changes within the cell. This chain is Large-conductance mechanosensitive channel, found in Variovorax paradoxus (strain S110).